A 407-amino-acid chain; its full sequence is uncharacterized protein (407 aa).

12 helical membrane-spanning segments follow: residues 22 to 42 (IVSVVSFTFICYLTIGLPLAV), 51 to 71 (LGFSAIVAGAAISVQYFATLA), 101 to 121 (ALLLSAFAFARWPAASIVLLV), 126 to 146 (VLGIGESLVGTGAILWGIGRV), 154 to 174 (VISWNGIATYGALAIGAPVGV), 179 to 199 (ALIPAVLGMLVIALAALGYYL), 227 to 247 (GLGLALGSAGFGSIATFITLY), 258 to 278 (LSLTVFGTLFIGARLLFANTI), 286 to 306 (VAIVSFAFECAGLLMLWLAPV), 309 to 329 (VALVGAALTGFGFALIFPALG), 347 to 367 (AYSVFLDLSLGITGPLAGYVA), and 369 to 389 (AFGYPQVFLCAAVAAAAGVAL).

This sequence belongs to the major facilitator superfamily. YhhS family.

It is found in the cell inner membrane. This is an uncharacterized protein from Burkholderia pseudomallei (strain 1106a).